The chain runs to 181 residues: Protein Syd (181 aa).

The protein belongs to the Syd family.

It is found in the cell inner membrane. Functionally, interacts with the SecY protein in vivo. May bind preferentially to an uncomplexed state of SecY, thus functioning either as a chelating agent for excess SecY in the cell or as a regulatory factor that negatively controls the translocase function. In Salmonella agona (strain SL483), this protein is Protein Syd.